Here is a 449-residue protein sequence, read N- to C-terminus: UDP-N-acetylmuramate--L-alanine ligase (449 aa).

121–127 is an ATP binding site; the sequence is GAHGKSS.

It belongs to the MurCDEF family.

It localises to the cytoplasm. The enzyme catalyses UDP-N-acetyl-alpha-D-muramate + L-alanine + ATP = UDP-N-acetyl-alpha-D-muramoyl-L-alanine + ADP + phosphate + H(+). It functions in the pathway cell wall biogenesis; peptidoglycan biosynthesis. Its function is as follows. Cell wall formation. This Helicobacter pylori (strain P12) protein is UDP-N-acetylmuramate--L-alanine ligase.